We begin with the raw amino-acid sequence, 269 residues long: Ribosomal RNA large subunit methyltransferase E (269 aa).

Residues glycine 58, tryptophan 60, aspartate 78, aspartate 96, and aspartate 120 each contribute to the S-adenosyl-L-methionine site. Lysine 160 functions as the Proton acceptor in the catalytic mechanism. The interval 234-269 (HEKKEGNETSDNDEDNNKNGLMIKKIKELRGKRSKL) is disordered. Over residues 258 to 269 (KIKELRGKRSKL) the composition is skewed to basic and acidic residues.

The protein belongs to the class I-like SAM-binding methyltransferase superfamily. RNA methyltransferase RlmE family.

It is found in the cytoplasm. The catalysed reaction is uridine(2552) in 23S rRNA + S-adenosyl-L-methionine = 2'-O-methyluridine(2552) in 23S rRNA + S-adenosyl-L-homocysteine + H(+). In terms of biological role, specifically methylates the uridine in position 2552 of 23S rRNA at the 2'-O position of the ribose in the fully assembled 50S ribosomal subunit. The protein is Ribosomal RNA large subunit methyltransferase E of Methanococcus aeolicus (strain ATCC BAA-1280 / DSM 17508 / OCM 812 / Nankai-3).